A 418-amino-acid polypeptide reads, in one-letter code: GTPase Obg (418 aa).

In terms of domain architecture, Obg spans 1–156; it reads MKFIDEITLN…KKLTLVLKVL (156 aa). In terms of domain architecture, OBG-type G spans 157–324; the sequence is ADVGFVGKPS…LKEALWQSVK (168 aa). GTP contacts are provided by residues 163-170, 188-192, 209-212, 278-281, and 305-307; these read GKPSAGKS, FTTLV, DLPG, NKKD, and SAL. The Mg(2+) site is built by serine 170 and threonine 190. An OCT domain is found at 339–417; that stretch reads VFINFEADFN…IYDYEFVWGN (79 aa).

This sequence belongs to the TRAFAC class OBG-HflX-like GTPase superfamily. OBG GTPase family. Monomer. Mg(2+) serves as cofactor.

The protein localises to the cytoplasm. Its function is as follows. An essential GTPase which binds GTP, GDP and possibly (p)ppGpp with moderate affinity, with high nucleotide exchange rates and a fairly low GTP hydrolysis rate. Plays a role in control of the cell cycle, stress response, ribosome biogenesis and in those bacteria that undergo differentiation, in morphogenesis control. The polypeptide is GTPase Obg (Mycoplasmopsis pulmonis (strain UAB CTIP) (Mycoplasma pulmonis)).